A 98-amino-acid chain; its full sequence is NADH-ubiquinone oxidoreductase chain 4L (98 aa).

The next 3 helical transmembrane spans lie at 1–21, 29–49, and 61–81; these read MSLVYMNIMTAFMVSLAGLLM, SLLCLEGMMLSLFVMATLTIL, and IILLVFAACEAALGLSLLVMV.

It belongs to the complex I subunit 4L family. As to quaternary structure, core subunit of respiratory chain NADH dehydrogenase (Complex I) which is composed of 45 different subunits.

It is found in the mitochondrion inner membrane. It catalyses the reaction a ubiquinone + NADH + 5 H(+)(in) = a ubiquinol + NAD(+) + 4 H(+)(out). In terms of biological role, core subunit of the mitochondrial membrane respiratory chain NADH dehydrogenase (Complex I) which catalyzes electron transfer from NADH through the respiratory chain, using ubiquinone as an electron acceptor. Part of the enzyme membrane arm which is embedded in the lipid bilayer and involved in proton translocation. The chain is NADH-ubiquinone oxidoreductase chain 4L (MT-ND4L) from Rangifer tarandus (Reindeer).